The primary structure comprises 79 residues: Cytochrome b (79 aa).

Helical transmembrane passes span Thr-1–Met-7, Trp-31–Ile-52, and Trp-67–Ala-79. Positions 37 and 51 each coordinate heme b.

The protein belongs to the cytochrome b family. In terms of assembly, the cytochrome bc1 complex contains 11 subunits: 3 respiratory subunits (MT-CYB, CYC1 and UQCRFS1), 2 core proteins (UQCRC1 and UQCRC2) and 6 low-molecular weight proteins (UQCRH/QCR6, UQCRB/QCR7, UQCRQ/QCR8, UQCR10/QCR9, UQCR11/QCR10 and a cleavage product of UQCRFS1). This cytochrome bc1 complex then forms a dimer. Heme b is required as a cofactor.

The protein localises to the mitochondrion inner membrane. Functionally, component of the ubiquinol-cytochrome c reductase complex (complex III or cytochrome b-c1 complex) that is part of the mitochondrial respiratory chain. The b-c1 complex mediates electron transfer from ubiquinol to cytochrome c. Contributes to the generation of a proton gradient across the mitochondrial membrane that is then used for ATP synthesis. This is Cytochrome b (MT-CYB) from Corcorax melanoramphos (White-winged chough).